Here is a 379-residue protein sequence, read N- to C-terminus: Probable leucine aminopeptidase TRV_05286 (379 aa).

Positions 1 to 18 are cleaved as a signal peptide; the sequence is MKIATLAVVSAFAATAIA. 2 residues coordinate Zn(2+): histidine 182 and aspartate 201. Residues asparagine 202 and asparagine 226 are each glycosylated (N-linked (GlcNAc...) asparagine). Residues glutamate 240 and aspartate 267 each contribute to the Zn(2+) site. An intrachain disulfide couples cysteine 312 to cysteine 316. Histidine 345 contributes to the Zn(2+) binding site.

Belongs to the peptidase M28 family. M28E subfamily. Monomer. Requires Zn(2+) as cofactor.

It localises to the secreted. Its function is as follows. Probable extracellular aminopeptidase which contributes to pathogenicity. This Trichophyton verrucosum (strain HKI 0517) protein is Probable leucine aminopeptidase TRV_05286.